The primary structure comprises 415 residues: MNFIEDLKWRGALNQVTDEAGLIEAMASGEIGAYVGTDPTADSLHLGHLIPFMVLKRFQNAGGKAVIIIGGATGAIGDPRPTTERQLLSPEQLRQNEKGITEQVTKLFGDEKTAIVNNNDWLGKLTLTDFLRDYGKLFSINVMLKKDVVASRLETGISFTEFTYQILQGIDYHELWRRHNVQLQIGGSDQWGNITSGIDLIHSIEGNNATAFGLTIPLMTDSSGKKFGKSEGNAIWLNPEKTSPYTFYQFWYNQSDEDVVKYLKYFTFLGVDEINNLEQEAKNNPGGRIAQKRLAQEVTKFVHGEQAVADAEKLSAALFSGDVANLSAADIADAFGGVPSFDITSEKKNVVDFLVDGEVEKSKRQAREDVTNGAITISGEKVTDVNFEIDPTKHYDGEFVLVRRGKKKYFLGKVK.

Tyr34 is a binding site for L-tyrosine. Positions 39–48 match the 'HIGH' region motif; that stretch reads PTADSLHLGH. L-tyrosine is bound by residues Tyr164 and Gln168. The 'KMSKS' region motif lies at 226-230; it reads KFGKS. Residue Lys229 coordinates ATP. In terms of domain architecture, S4 RNA-binding spans 348–415; the sequence is KNVVDFLVDG…KKKYFLGKVK (68 aa).

This sequence belongs to the class-I aminoacyl-tRNA synthetase family. TyrS type 1 subfamily. In terms of assembly, homodimer.

It is found in the cytoplasm. The catalysed reaction is tRNA(Tyr) + L-tyrosine + ATP = L-tyrosyl-tRNA(Tyr) + AMP + diphosphate + H(+). Functionally, catalyzes the attachment of tyrosine to tRNA(Tyr) in a two-step reaction: tyrosine is first activated by ATP to form Tyr-AMP and then transferred to the acceptor end of tRNA(Tyr). This is Tyrosine--tRNA ligase from Leuconostoc mesenteroides subsp. mesenteroides (strain ATCC 8293 / DSM 20343 / BCRC 11652 / CCM 1803 / JCM 6124 / NCDO 523 / NBRC 100496 / NCIMB 8023 / NCTC 12954 / NRRL B-1118 / 37Y).